Consider the following 190-residue polypeptide: Peptidyl-tRNA hydrolase (190 aa).

Y14 is a tRNA binding site. H19 functions as the Proton acceptor in the catalytic mechanism. Positions 64 and 66 each coordinate tRNA.

Belongs to the PTH family. In terms of assembly, monomer.

Its subcellular location is the cytoplasm. It carries out the reaction an N-acyl-L-alpha-aminoacyl-tRNA + H2O = an N-acyl-L-amino acid + a tRNA + H(+). In terms of biological role, hydrolyzes ribosome-free peptidyl-tRNAs (with 1 or more amino acids incorporated), which drop off the ribosome during protein synthesis, or as a result of ribosome stalling. Catalyzes the release of premature peptidyl moieties from peptidyl-tRNA molecules trapped in stalled 50S ribosomal subunits, and thus maintains levels of free tRNAs and 50S ribosomes. In Rhodopirellula baltica (strain DSM 10527 / NCIMB 13988 / SH1), this protein is Peptidyl-tRNA hydrolase.